The sequence spans 294 residues: Ribosomal RNA small subunit methyltransferase H (294 aa).

S-adenosyl-L-methionine contacts are provided by residues 40-42 (GGH), D59, F86, D102, and Q109.

Belongs to the methyltransferase superfamily. RsmH family.

The protein localises to the cytoplasm. It catalyses the reaction cytidine(1402) in 16S rRNA + S-adenosyl-L-methionine = N(4)-methylcytidine(1402) in 16S rRNA + S-adenosyl-L-homocysteine + H(+). Its function is as follows. Specifically methylates the N4 position of cytidine in position 1402 (C1402) of 16S rRNA. This Cyanothece sp. (strain PCC 7425 / ATCC 29141) protein is Ribosomal RNA small subunit methyltransferase H.